We begin with the raw amino-acid sequence, 467 residues long: Polygalacturonase (467 aa).

Residues 1–27 (MALQRRFFQFVIITLLIPSFILGYTSA) form the signal peptide. The active-site Proton donor is the D283. N290 is a glycosylation site (N-linked (GlcNAc...) asparagine). Residue H306 is part of the active site.

It belongs to the glycosyl hydrolase 28 family.

The protein localises to the secreted. Its subcellular location is the cell wall. It carries out the reaction (1,4-alpha-D-galacturonosyl)n+m + H2O = (1,4-alpha-D-galacturonosyl)n + (1,4-alpha-D-galacturonosyl)m.. Acts in concert with the pectinesterase, in the ripening process. Is involved in cell wall metabolism, specifically in polyuronide degradation. In Actinidia deliciosa (Kiwi), this protein is Polygalacturonase.